The chain runs to 583 residues: Sensor protein SrrB (583 aa).

The Cytoplasmic portion of the chain corresponds to 1–11; sequence MMSRLNSVVIK. The chain crosses the membrane as a helical span at residues 12-32; the sequence is LWLTIILIVTTVLILLSIALI. The Extracellular segment spans residues 33–174; that stretch reads TFMQYYFTQE…SIEDTNNAIT (142 aa). A helical transmembrane segment spans residues 175–195; the sequence is IITIITAVIFLTITTVFAFFL. The Cytoplasmic portion of the chain corresponds to 196 to 583; sequence SSRITKPLRR…TFIIKLPKPE (388 aa). An HAMP domain is found at 197 to 249; the sequence is SRITKPLRRLRDQATRVSEGDYSYKPSVTTKDEIGQLSQAFNQMSTEIEEHVD. In terms of domain architecture, Histidine kinase spans 366-583; sequence NVSHELRTPI…TFIIKLPKPE (218 aa). Position 369 is a phosphohistidine; by autocatalysis (His-369).

It localises to the cell membrane. The enzyme catalyses ATP + protein L-histidine = ADP + protein N-phospho-L-histidine.. Its function is as follows. Member of the two-component regulatory system SrrA/SrrB, which is involved in the global regulation of staphylococcal virulence factors in response to environmental oxygen levels as well as biofilm formation. Also plays an essential role in host-derived nitric oxide resistance by regulating hmp/flavohemoglobin, an enzyme that detoxifies nitric oxide by converting it to nitrate. Functions as a sensor protein kinase which is autophosphorylated at a histidine residue and transfers its phosphate group to SrrA. In turn, SrrA binds to the upstream promoter regions of the target genes to positively and negatively regulate their expression. The sequence is that of Sensor protein SrrB (srrB) from Staphylococcus aureus (strain MW2).